Consider the following 460-residue polypeptide: G-protein coupled receptor 22 (460 aa).

Residues 1–74 lie on the Cytoplasmic side of the membrane; sequence MESMPSSLTH…YPVSFQVSLT (74 aa). The helical transmembrane segment at 75–95 threads the bilayer; sequence GFLMLEIVLGLSSNLTVLALY. Over 96-114 the chain is Extracellular; the sequence is CMKSNLVSSVSNIVTMNLH. A helical transmembrane segment spans residues 115-135; it reads VLDVLVCVGCIPLTIVVVLLP. Topologically, residues 136–144 are cytoplasmic; that stretch reads LEGNNALIC. The helical transmembrane segment at 145–165 threads the bilayer; the sequence is CFHEACVSFASVATAANVLAI. At 166 to 185 the chain is on the extracellular side; that stretch reads TLDRYDISVRPANRVLTMGR. The helical transmembrane segment at 186 to 206 threads the bilayer; the sequence is AVALLGSIWALSFFSFLVPFI. Residues 207–235 lie on the Cytoplasmic side of the membrane; that stretch reads EEGFFSQAGNERNQTEAEEPSNEYYTELG. The helical transmembrane segment at 236–256 threads the bilayer; the sequence is LYYHLLAQIPIFFFTAVVMLV. The Extracellular segment spans residues 257–343; that stretch reads TYYKILQALN…ERQKRVFRMS (87 aa). Residues 276-286 are compositionally biased toward basic residues; it reads VPKKKPRKKKT. Residues 276 to 309 are disordered; it reads VPKKKPRKKKTISMTSTQPESTDASQSSAGRNAP. Residues 287 to 305 show a composition bias toward polar residues; that stretch reads ISMTSTQPESTDASQSSAG. A helical membrane pass occupies residues 344-364; the sequence is LLIISTFLLCWTPITVLNTVI. The Cytoplasmic segment spans residues 365–377; it reads LSVGPSNFTVRLR. A helical transmembrane segment spans residues 378 to 398; the sequence is LGFLVMAYGTTIFHPLLYAFT. Over 399–460 the chain is Extracellular; the sequence is RQKFQKVLKS…QKCLSSEDVE (62 aa).

Belongs to the G-protein coupled receptor 1 family.

The protein resides in the cell membrane. Its function is as follows. Orphan G-protein coupled receptor that regulates cilia length and structure in the Kupffer's vesicle leading to the left-right asymmetry development by establishing a directional fluid flow. In Danio rerio (Zebrafish), this protein is G-protein coupled receptor 22 (gpr22a).